A 230-amino-acid polypeptide reads, in one-letter code: Ribulose-phosphate 3-epimerase (230 aa).

S10 is a binding site for substrate. Positions 35, 37, and 68 each coordinate a divalent metal cation. D37 functions as the Proton acceptor in the catalytic mechanism. Substrate contacts are provided by residues H68, 146–149 (GFGG), 179–181 (DGG), and 201–202 (GS). An a divalent metal cation-binding site is contributed by D179. The active-site Proton donor is D179.

The protein belongs to the ribulose-phosphate 3-epimerase family. In terms of assembly, homohexamer. Requires a divalent metal cation as cofactor.

It carries out the reaction D-ribulose 5-phosphate = D-xylulose 5-phosphate. The protein operates within carbohydrate degradation. In terms of biological role, catalyzes the reversible epimerization of D-ribulose 5-phosphate to D-xylulose 5-phosphate. In Synechocystis sp. (strain ATCC 27184 / PCC 6803 / Kazusa), this protein is Ribulose-phosphate 3-epimerase.